The chain runs to 457 residues: Casein kinase 1-like protein 11 (457 aa).

Residues 15 to 284 (FKLGRKLGSG…LRRLFRDLFI (270 aa)) form the Protein kinase domain. ATP-binding positions include 21 to 29 (LGSGSFGEL) and Lys44. Asp134 functions as the Proton acceptor in the catalytic mechanism. Disordered regions lie at residues 305-337 (GSSS…GQDL) and 352-442 (NVSS…EDAI). Residues 311 to 324 (RPTPRPALDPPGPP) are compositionally biased toward pro residues. 2 stretches are compositionally biased toward polar residues: residues 383 to 403 (NGST…SAEP) and 409 to 429 (SRLF…QSYE).

The protein belongs to the protein kinase superfamily. CK1 Ser/Thr protein kinase family. Casein kinase I subfamily. In terms of assembly, monomer. Post-translationally, autophosphorylated.

It localises to the cytoplasm. The protein localises to the nucleus. It catalyses the reaction L-seryl-[protein] + ATP = O-phospho-L-seryl-[protein] + ADP + H(+). It carries out the reaction L-threonyl-[protein] + ATP = O-phospho-L-threonyl-[protein] + ADP + H(+). With respect to regulation, partially inhibited by N-(2-aminoethyl)-5-chloroisoquinoline-8-sulfonamide (CKI-7). In terms of biological role, casein kinases are operationally defined by their preferential utilization of acidic proteins such as caseins as substrates. Can phosphorylate casein, phosvitin, myosin light chains and poly(Glu,Tyr) in vitro. This Arabidopsis thaliana (Mouse-ear cress) protein is Casein kinase 1-like protein 11.